Here is a 603-residue protein sequence, read N- to C-terminus: Elongation factor 4 (603 aa).

A tr-type G domain is found at 2–184 (NHIRNFSIIA…AVVARMPPPR (183 aa)). Residues 14–19 (DHGKST) and 131–134 (NKMD) each bind GTP.

It belongs to the TRAFAC class translation factor GTPase superfamily. Classic translation factor GTPase family. LepA subfamily.

Its subcellular location is the cell inner membrane. It carries out the reaction GTP + H2O = GDP + phosphate + H(+). In terms of biological role, required for accurate and efficient protein synthesis under certain stress conditions. May act as a fidelity factor of the translation reaction, by catalyzing a one-codon backward translocation of tRNAs on improperly translocated ribosomes. Back-translocation proceeds from a post-translocation (POST) complex to a pre-translocation (PRE) complex, thus giving elongation factor G a second chance to translocate the tRNAs correctly. Binds to ribosomes in a GTP-dependent manner. The sequence is that of Elongation factor 4 from Albidiferax ferrireducens (strain ATCC BAA-621 / DSM 15236 / T118) (Rhodoferax ferrireducens).